Here is a 348-residue protein sequence, read N- to C-terminus: Ion-translocating oxidoreductase complex subunit D (348 aa).

The next 5 helical transmembrane spans lie at 15–35 (LTAK…GMQA), 36–56 (YFFG…AVAI), 67–87 (LTAF…LAIS), 88–108 (IPPY…LLLA), and 125–145 (VAYA…LVPI). At Thr-186 the chain carries FMN phosphoryl threonine. A run of 5 helical transmembrane segments spans residues 212 to 232 (LFAN…LLLI), 241 to 261 (IPAA…LLLP), 265 to 285 (LNVV…FIAT), 298 to 318 (LIFG…GNYP), and 320 to 340 (AVAF…HYTQ).

This sequence belongs to the NqrB/RnfD family. As to quaternary structure, the complex is composed of six subunits: RnfA, RnfB, RnfC, RnfD, RnfE and RnfG. The cofactor is FMN.

Its subcellular location is the cell inner membrane. Its function is as follows. Part of a membrane-bound complex that couples electron transfer with translocation of ions across the membrane. The polypeptide is Ion-translocating oxidoreductase complex subunit D (Actinobacillus pleuropneumoniae serotype 3 (strain JL03)).